Consider the following 249-residue polypeptide: Probable transcriptional regulatory protein CYA_2259 (249 aa).

This sequence belongs to the TACO1 family.

The protein resides in the cytoplasm. The polypeptide is Probable transcriptional regulatory protein CYA_2259 (Synechococcus sp. (strain JA-3-3Ab) (Cyanobacteria bacterium Yellowstone A-Prime)).